The following is a 678-amino-acid chain: Serine/threonine-protein kinase mph1 (678 aa).

Disordered regions lie at residues 39-93 (KNDT…NSAL) and 114-209 (LPST…SNSV). Polar residues-rich tracts occupy residues 41–66 (DTFS…SSGA) and 114–125 (LPSTNASHSEVS). Residues 316 to 607 (FIKLGVVGKG…LVHPFLNPLP (292 aa)) form the Protein kinase domain. ATP contacts are provided by residues 322 to 330 (VGKGGSSMV) and K345. The Proton acceptor role is filled by D442.

The protein belongs to the protein kinase superfamily. Ser/Thr protein kinase family.

It carries out the reaction L-seryl-[protein] + ATP = O-phospho-L-seryl-[protein] + ADP + H(+). It catalyses the reaction L-threonyl-[protein] + ATP = O-phospho-L-threonyl-[protein] + ADP + H(+). The enzyme catalyses L-tyrosyl-[protein] + ATP = O-phospho-L-tyrosyl-[protein] + ADP + H(+). Involved in mitotic spindle assembly checkpoint signaling, a process that delays anaphase until chromosomes are bioriented on the spindle, and in the repair of incorrect mitotic kinetochore-spindle microtubule attachments. Phosphorylates spc7/knl1 on MELT motifs; phosphorylation is required for recruitment of the BUB1-BUB3 complex to kinetochores. The protein is Serine/threonine-protein kinase mph1 of Schizosaccharomyces pombe (strain 972 / ATCC 24843) (Fission yeast).